We begin with the raw amino-acid sequence, 308 residues long: Probable GTP 3',8-cyclase (308 aa).

The 221-residue stretch at 4-224 folds into the Radical SAM core domain; that stretch reads RFGRPLEDLR…QIRKKHFRPR (221 aa). GTP is bound at residue R13. The [4Fe-4S] cluster site is built by C20, C24, and C27. A GTP-binding site is contributed by K60. Residue G64 coordinates S-adenosyl-L-methionine. T90 is a GTP binding site. S114 provides a ligand contact to S-adenosyl-L-methionine. K151 contacts GTP. 2 residues coordinate [4Fe-4S] cluster: C245 and C248. 250 to 252 provides a ligand contact to GTP; sequence RIR. C262 contacts [4Fe-4S] cluster.

It belongs to the radical SAM superfamily. MoaA family. [4Fe-4S] cluster serves as cofactor.

The enzyme catalyses GTP + AH2 + S-adenosyl-L-methionine = (8S)-3',8-cyclo-7,8-dihydroguanosine 5'-triphosphate + 5'-deoxyadenosine + L-methionine + A + H(+). It functions in the pathway cofactor biosynthesis; molybdopterin biosynthesis. Catalyzes the cyclization of GTP to (8S)-3',8-cyclo-7,8-dihydroguanosine 5'-triphosphate. The chain is Probable GTP 3',8-cyclase from Saccharolobus islandicus (strain M.16.27) (Sulfolobus islandicus).